The following is a 129-amino-acid chain: Prefoldin subunit alpha (129 aa).

The protein belongs to the prefoldin alpha subunit family. As to quaternary structure, heterohexamer of two alpha and four beta subunits.

Its subcellular location is the cytoplasm. Functionally, molecular chaperone capable of stabilizing a range of proteins. Seems to fulfill an ATP-independent, HSP70-like function in archaeal de novo protein folding. This Thermofilum pendens (strain DSM 2475 / Hrk 5) protein is Prefoldin subunit alpha.